Consider the following 702-residue polypeptide: MDTREFPLDRTRNIGIMAHIDAGKTTTTERILYYTGKIHKIGETHDGASQMDFMDQEKERGITIQSAATTAIWHGFHEQWKDTPYRVNIIDTPGHVDFTIEVERSLRVLDGAIAVLDGAAGVEPQTETVWRQATTYAVPRLVFVNKMDKMGADFQMSVDSLKERLDVNAKAIQWPIGAEDDFAGVIDLIQREAWYPDDKLGTEWEKRPIPDDLKDLVEEKRDELIEAVADVDDSLMEKYLGEEEITVDDLKAAIRRATLALKFYPVLAGSAYKDKGVQLLLDAVVDYLPSPLEVRPYTATDPDTGDEVDLKADDKKPFAALAFKIMTDPYVGRLTFLRVYTGTLKSGSYVQNTTKDTRERVGRLLQMHAITRREIDEVFSGDIAAAIGLKATSTGDSLTSVDRPLVLESMEFPDPVIQMAVEPKTKADQEKMAEALQKLSEEDPSFHAETNSETGQTLISGMGELHLDIMVDRMRREFNVDVNVGTPQVAYREAFTKTVQAQGKYIRQSGGKGQYGDVWIEFSPNDEGKGFEFDNAIVGGAVPREYIPAVEQGLKEAMQSGPLAGYPLVDLKAKLYDGSYHEVDSSEAAFKIAASMSLREASKTAGAVILEPIMKVSIVSPIDNLGDVMGHVSARRGMIEDQETHGNTVTVTSKIPLAEMFGYTTTLRSATQGRGTFQMFFDHYEAVPRNVQEDIIKNAGKE.

The region spanning 9 to 292 (DRTRNIGIMA…AVVDYLPSPL (284 aa)) is the tr-type G domain. Residues 18–25 (AHIDAGKT), 91–95 (DTPGH), and 145–148 (NKMD) contribute to the GTP site.

The protein belongs to the TRAFAC class translation factor GTPase superfamily. Classic translation factor GTPase family. EF-G/EF-2 subfamily.

It localises to the cytoplasm. Its function is as follows. Catalyzes the GTP-dependent ribosomal translocation step during translation elongation. During this step, the ribosome changes from the pre-translocational (PRE) to the post-translocational (POST) state as the newly formed A-site-bound peptidyl-tRNA and P-site-bound deacylated tRNA move to the P and E sites, respectively. Catalyzes the coordinated movement of the two tRNA molecules, the mRNA and conformational changes in the ribosome. In Oenococcus oeni (strain ATCC BAA-331 / PSU-1), this protein is Elongation factor G.